Here is a 60-residue protein sequence, read N- to C-terminus: Short neurotoxin 1 (60 aa).

4 disulfide bridges follow: C3–C22, C17–C39, C41–C52, and C53–C58.

Belongs to the three-finger toxin family. Short-chain subfamily. Type I alpha-neurotoxin sub-subfamily. Expressed by the venom gland.

It is found in the secreted. Its function is as follows. Binds to muscle nicotinic acetylcholine receptor (nAChR) and inhibit acetylcholine from binding to the receptor, thereby impairing neuromuscular transmission. This is Short neurotoxin 1 from Dendroaspis jamesoni kaimosae (Eastern Jameson's mamba).